Reading from the N-terminus, the 440-residue chain is Thymidine phosphorylase (440 aa).

The protein belongs to the thymidine/pyrimidine-nucleoside phosphorylase family. As to quaternary structure, homodimer.

It catalyses the reaction thymidine + phosphate = 2-deoxy-alpha-D-ribose 1-phosphate + thymine. The protein operates within pyrimidine metabolism; dTMP biosynthesis via salvage pathway; dTMP from thymine: step 1/2. In terms of biological role, the enzymes which catalyze the reversible phosphorolysis of pyrimidine nucleosides are involved in the degradation of these compounds and in their utilization as carbon and energy sources, or in the rescue of pyrimidine bases for nucleotide synthesis. The protein is Thymidine phosphorylase of Burkholderia pseudomallei (strain 1106a).